We begin with the raw amino-acid sequence, 327 residues long: Eukaryotic translation initiation factor 3 subunit I (327 aa).

5 WD repeats span residues 8–49, 51–89, 188–227, 229–268, and 285–324; these read GHER…GSYD, HNGA…CLYT, VHRY…KLKQ, KSER…GHFE, and GHFG…LGFT.

Belongs to the eIF-3 subunit I family. Component of the eukaryotic translation initiation factor 3 (eIF-3) complex.

Its subcellular location is the cytoplasm. Functionally, component of the eukaryotic translation initiation factor 3 (eIF-3) complex, which is involved in protein synthesis of a specialized repertoire of mRNAs and, together with other initiation factors, stimulates binding of mRNA and methionyl-tRNAi to the 40S ribosome. The eIF-3 complex specifically targets and initiates translation of a subset of mRNAs involved in cell proliferation. The protein is Eukaryotic translation initiation factor 3 subunit I of Caenorhabditis elegans.